We begin with the raw amino-acid sequence, 747 residues long: Putative T-box protein 31 (747 aa).

Positions 33–199 (QMLTKRKKTN…AGPAAKKTPD (167 aa)) form a DNA-binding region, T-box. Disordered regions lie at residues 268 to 289 (SLSSPAALKHDSTVSSDSDFDD) and 332 to 364 (SINNPGYLSTASSPAALNQDSSASEKSSIVRDK). Polar residues predominate over residues 332-358 (SINNPGYLSTASSPAALNQDSSASEKS).

Its subcellular location is the nucleus. In Caenorhabditis elegans, this protein is Putative T-box protein 31 (tbx-31).